We begin with the raw amino-acid sequence, 677 residues long: DNA ligase (677 aa).

NAD(+) contacts are provided by residues Asp38–Asp42, Ser87–Leu88, and Glu119. The N6-AMP-lysine intermediate role is filled by Lys121. Positions 142, 179, 296, and 320 each coordinate NAD(+). Zn(2+) is bound by residues Cys414, Cys417, Cys432, and Cys438. The region spanning Val595–Phe677 is the BRCT domain.

The protein belongs to the NAD-dependent DNA ligase family. LigA subfamily. Requires Mg(2+) as cofactor. Mn(2+) serves as cofactor.

It carries out the reaction NAD(+) + (deoxyribonucleotide)n-3'-hydroxyl + 5'-phospho-(deoxyribonucleotide)m = (deoxyribonucleotide)n+m + AMP + beta-nicotinamide D-nucleotide.. In terms of biological role, DNA ligase that catalyzes the formation of phosphodiester linkages between 5'-phosphoryl and 3'-hydroxyl groups in double-stranded DNA using NAD as a coenzyme and as the energy source for the reaction. It is essential for DNA replication and repair of damaged DNA. The chain is DNA ligase from Coxiella burnetii (strain CbuG_Q212) (Coxiella burnetii (strain Q212)).